Consider the following 212-residue polypeptide: Pyridoxine/pyridoxamine 5'-phosphate oxidase (212 aa).

Substrate is bound by residues 8-11 (RTNY) and lysine 66. Residues 61–66 (RIVLLK), 76–77 (FT), lysine 83, and glutamine 105 each bind FMN. Substrate contacts are provided by tyrosine 123, arginine 127, and serine 131. FMN-binding positions include 140–141 (QS) and tryptophan 185. 191 to 193 (RLH) provides a ligand contact to substrate. Arginine 195 serves as a coordination point for FMN.

This sequence belongs to the pyridoxamine 5'-phosphate oxidase family. Homodimer. Requires FMN as cofactor.

The catalysed reaction is pyridoxamine 5'-phosphate + O2 + H2O = pyridoxal 5'-phosphate + H2O2 + NH4(+). The enzyme catalyses pyridoxine 5'-phosphate + O2 = pyridoxal 5'-phosphate + H2O2. It functions in the pathway cofactor metabolism; pyridoxal 5'-phosphate salvage; pyridoxal 5'-phosphate from pyridoxamine 5'-phosphate: step 1/1. Its pathway is cofactor metabolism; pyridoxal 5'-phosphate salvage; pyridoxal 5'-phosphate from pyridoxine 5'-phosphate: step 1/1. Functionally, catalyzes the oxidation of either pyridoxine 5'-phosphate (PNP) or pyridoxamine 5'-phosphate (PMP) into pyridoxal 5'-phosphate (PLP). The sequence is that of Pyridoxine/pyridoxamine 5'-phosphate oxidase from Leptospira biflexa serovar Patoc (strain Patoc 1 / Ames).